The following is a 398-amino-acid chain: Argininosuccinate synthase (398 aa).

Residue 9–17 coordinates ATP; that stretch reads AYSGGLDTS. Residue Tyr85 coordinates L-citrulline. Gly115 contributes to the ATP binding site. Residues Thr117, Asn121, and Asp122 each contribute to the L-aspartate site. Asn121 provides a ligand contact to L-citrulline. 4 residues coordinate L-citrulline: Arg125, Ser173, Glu258, and Tyr270.

It belongs to the argininosuccinate synthase family. Type 1 subfamily. In terms of assembly, homotetramer.

Its subcellular location is the cytoplasm. The enzyme catalyses L-citrulline + L-aspartate + ATP = 2-(N(omega)-L-arginino)succinate + AMP + diphosphate + H(+). It functions in the pathway amino-acid biosynthesis; L-arginine biosynthesis; L-arginine from L-ornithine and carbamoyl phosphate: step 2/3. This Streptococcus pneumoniae (strain ATCC BAA-255 / R6) protein is Argininosuccinate synthase.